A 116-amino-acid chain; its full sequence is Large ribosomal subunit protein bL17 (116 aa).

It belongs to the bacterial ribosomal protein bL17 family. In terms of assembly, part of the 50S ribosomal subunit. Contacts protein L32.

In Helicobacter pylori (strain P12), this protein is Large ribosomal subunit protein bL17.